The following is a 292-amino-acid chain: UPF0725 protein At4g28920 (292 aa).

Residues 1 to 17 (MSENDSSESDIEMDPEE) show a composition bias toward acidic residues. The segment at 1 to 24 (MSENDSSESDIEMDPEEEKVYRRQ) is disordered.

Belongs to the UPF0725 (EMB2204) family.

This chain is UPF0725 protein At4g28920, found in Arabidopsis thaliana (Mouse-ear cress).